We begin with the raw amino-acid sequence, 381 residues long: Transaldolase 1 (381 aa).

Lys-149 (schiff-base intermediate with substrate) is an active-site residue.

It belongs to the transaldolase family. Type 2 subfamily.

The protein resides in the cytoplasm. It carries out the reaction D-sedoheptulose 7-phosphate + D-glyceraldehyde 3-phosphate = D-erythrose 4-phosphate + beta-D-fructose 6-phosphate. It participates in carbohydrate degradation; pentose phosphate pathway; D-glyceraldehyde 3-phosphate and beta-D-fructose 6-phosphate from D-ribose 5-phosphate and D-xylulose 5-phosphate (non-oxidative stage): step 2/3. Its function is as follows. Transaldolase is important for the balance of metabolites in the pentose-phosphate pathway. The polypeptide is Transaldolase 1 (tal1) (Streptomyces coelicolor (strain ATCC BAA-471 / A3(2) / M145)).